A 635-amino-acid polypeptide reads, in one-letter code: Threonine--tRNA ligase (635 aa).

The TGS domain occupies 1-61 (MIKITLKDGS…KEDAALELLT (61 aa)). The tract at residues 242-532 (DHRKLGQELD…LTEHFAGAFP (291 aa)) is catalytic. 3 residues coordinate Zn(2+): cysteine 333, histidine 384, and histidine 509.

Belongs to the class-II aminoacyl-tRNA synthetase family. Homodimer. The cofactor is Zn(2+).

Its subcellular location is the cytoplasm. It catalyses the reaction tRNA(Thr) + L-threonine + ATP = L-threonyl-tRNA(Thr) + AMP + diphosphate + H(+). In terms of biological role, catalyzes the attachment of threonine to tRNA(Thr) in a two-step reaction: L-threonine is first activated by ATP to form Thr-AMP and then transferred to the acceptor end of tRNA(Thr). Also edits incorrectly charged L-seryl-tRNA(Thr). The protein is Threonine--tRNA ligase of Desulforamulus reducens (strain ATCC BAA-1160 / DSM 100696 / MI-1) (Desulfotomaculum reducens).